Here is a 147-residue protein sequence, read N- to C-terminus: Myoglobin (147 aa).

The region spanning 2-141 (ADFDAVLKFW…FIADMDANYK (140 aa)) is the Globin domain. Histidine 60 contributes to the nitrite binding site. Histidine 60 is a binding site for O2. Histidine 89 contributes to the heme b binding site.

It belongs to the globin family. As to quaternary structure, monomeric.

It is found in the cytoplasm. The protein localises to the sarcoplasm. It carries out the reaction Fe(III)-heme b-[protein] + nitric oxide + H2O = Fe(II)-heme b-[protein] + nitrite + 2 H(+). The enzyme catalyses H2O2 + AH2 = A + 2 H2O. Monomeric heme protein which primary function is to store oxygen and facilitate its diffusion within muscle tissues. Reversibly binds oxygen through a pentacoordinated heme iron and enables its timely and efficient release as needed during periods of heightened demand. Depending on the oxidative conditions of tissues and cells, and in addition to its ability to bind oxygen, it also has a nitrite reductase activity whereby it regulates the production of bioactive nitric oxide. Under stress conditions, like hypoxia and anoxia, it also protects cells against reactive oxygen species thanks to its pseudoperoxidase activity. The polypeptide is Myoglobin (mb) (Scomber japonicus (Chub mackerel)).